The sequence spans 435 residues: Glutamate-1-semialdehyde 2,1-aminomutase (435 aa).

N6-(pyridoxal phosphate)lysine is present on K266.

This sequence belongs to the class-III pyridoxal-phosphate-dependent aminotransferase family. HemL subfamily. Homodimer. Pyridoxal 5'-phosphate is required as a cofactor.

It is found in the cytoplasm. The catalysed reaction is (S)-4-amino-5-oxopentanoate = 5-aminolevulinate. The protein operates within porphyrin-containing compound metabolism; protoporphyrin-IX biosynthesis; 5-aminolevulinate from L-glutamyl-tRNA(Glu): step 2/2. The polypeptide is Glutamate-1-semialdehyde 2,1-aminomutase (Coxiella burnetii (strain CbuK_Q154) (Coxiella burnetii (strain Q154))).